The sequence spans 215 residues: Protein HP-25 homolog 2 (215 aa).

The signal sequence occupies residues 1 to 30 (MPGRGGQSLSMVCVDVWILALSVLSVMADA). Residues 35-79 (VTESCDSQGPPGLPGPPGLPGPPGPPGPPGPPGLRGPTGIPGDIE) are disordered. The Collagen-like domain maps to 43 to 76 (GPPGLPGPPGLPGPPGPPGPPGPPGLRGPTGIPG). Residues 45–68 (PGLPGPPGLPGPPGPPGPPGPPGL) show a composition bias toward pro residues. The region spanning 82–215 (LSPPKSAFAV…GYLLYGNYPG (134 aa)) is the C1q domain.

The protein localises to the secreted. This chain is Protein HP-25 homolog 2, found in Bos taurus (Bovine).